The following is a 145-amino-acid chain: Peptide methionine sulfoxide reductase MsrB (145 aa).

Residues 6–129 (KNERLKQLTD…NSAALRFIPV (124 aa)) form the MsrB domain. Cys118 (nucleophile) is an active-site residue.

This sequence belongs to the MsrB Met sulfoxide reductase family.

It carries out the reaction L-methionyl-[protein] + [thioredoxin]-disulfide + H2O = L-methionyl-(R)-S-oxide-[protein] + [thioredoxin]-dithiol. The protein is Peptide methionine sulfoxide reductase MsrB of Listeria innocua serovar 6a (strain ATCC BAA-680 / CLIP 11262).